We begin with the raw amino-acid sequence, 399 residues long: Enoyl-[acyl-carrier-protein] reductase [NADH] (399 aa).

NAD(+) contacts are provided by residues Gly48–Tyr53, Phe74–Glu75, Asp111–Ala112, and Leu139–Ala140. Residue Tyr225 participates in substrate binding. Tyr235 acts as the Proton donor in catalysis. Residues Lys244 and Val274–Thr276 each bind NAD(+).

It belongs to the TER reductase family. Monomer.

It carries out the reaction a 2,3-saturated acyl-[ACP] + NAD(+) = a (2E)-enoyl-[ACP] + NADH + H(+). Its pathway is lipid metabolism; fatty acid biosynthesis. Functionally, involved in the final reduction of the elongation cycle of fatty acid synthesis (FAS II). Catalyzes the reduction of a carbon-carbon double bond in an enoyl moiety that is covalently linked to an acyl carrier protein (ACP). The protein is Enoyl-[acyl-carrier-protein] reductase [NADH] of Yersinia pestis bv. Antiqua (strain Antiqua).